We begin with the raw amino-acid sequence, 172 residues long: MPLLDSFTVDHTRMEAPAVRVAKKMQTPKGDTITVFDLRFTAPNKDILSEKGIHTLEHLYAGFMRNHLNGTDVEIIDISPMGCRTGFYMSLIGTPVEQTVANAWIASMEDVLNVEDQNKIPELNEYQCGTYTMHSLEEAKAIATAILAAGIQVNKNDDLALPESMLKELSVD.

Positions 54, 58, and 128 each coordinate Fe cation.

This sequence belongs to the LuxS family. As to quaternary structure, homodimer. Fe cation is required as a cofactor.

It carries out the reaction S-(5-deoxy-D-ribos-5-yl)-L-homocysteine = (S)-4,5-dihydroxypentane-2,3-dione + L-homocysteine. Functionally, involved in the synthesis of autoinducer 2 (AI-2) which is secreted by bacteria and is used to communicate both the cell density and the metabolic potential of the environment. The regulation of gene expression in response to changes in cell density is called quorum sensing. Catalyzes the transformation of S-ribosylhomocysteine (RHC) to homocysteine (HC) and 4,5-dihydroxy-2,3-pentadione (DPD). The protein is S-ribosylhomocysteine lyase of Aliivibrio salmonicida (strain LFI1238) (Vibrio salmonicida (strain LFI1238)).